The following is a 149-amino-acid chain: D-aminoacyl-tRNA deacylase (149 aa).

Residues 137-138 carry the Gly-cisPro motif, important for rejection of L-amino acids motif; it reads GP.

It belongs to the DTD family. In terms of assembly, homodimer.

It is found in the cytoplasm. The enzyme catalyses glycyl-tRNA(Ala) + H2O = tRNA(Ala) + glycine + H(+). It catalyses the reaction a D-aminoacyl-tRNA + H2O = a tRNA + a D-alpha-amino acid + H(+). Its function is as follows. An aminoacyl-tRNA editing enzyme that deacylates mischarged D-aminoacyl-tRNAs. Also deacylates mischarged glycyl-tRNA(Ala), protecting cells against glycine mischarging by AlaRS. Acts via tRNA-based rather than protein-based catalysis; rejects L-amino acids rather than detecting D-amino acids in the active site. By recycling D-aminoacyl-tRNA to D-amino acids and free tRNA molecules, this enzyme counteracts the toxicity associated with the formation of D-aminoacyl-tRNA entities in vivo and helps enforce protein L-homochirality. This chain is D-aminoacyl-tRNA deacylase, found in Clostridium botulinum (strain 657 / Type Ba4).